The primary structure comprises 417 residues: Gamma-glutamyl phosphate reductase (417 aa).

This sequence belongs to the gamma-glutamyl phosphate reductase family.

The protein resides in the cytoplasm. The catalysed reaction is L-glutamate 5-semialdehyde + phosphate + NADP(+) = L-glutamyl 5-phosphate + NADPH + H(+). Its pathway is amino-acid biosynthesis; L-proline biosynthesis; L-glutamate 5-semialdehyde from L-glutamate: step 2/2. Functionally, catalyzes the NADPH-dependent reduction of L-glutamate 5-phosphate into L-glutamate 5-semialdehyde and phosphate. The product spontaneously undergoes cyclization to form 1-pyrroline-5-carboxylate. In Haemophilus influenzae (strain PittGG), this protein is Gamma-glutamyl phosphate reductase.